A 447-amino-acid chain; its full sequence is Na(+)-translocating NADH-quinone reductase subunit A (447 aa).

The protein belongs to the NqrA family. In terms of assembly, composed of six subunits; NqrA, NqrB, NqrC, NqrD, NqrE and NqrF.

It catalyses the reaction a ubiquinone + n Na(+)(in) + NADH + H(+) = a ubiquinol + n Na(+)(out) + NAD(+). Functionally, NQR complex catalyzes the reduction of ubiquinone-1 to ubiquinol by two successive reactions, coupled with the transport of Na(+) ions from the cytoplasm to the periplasm. NqrA to NqrE are probably involved in the second step, the conversion of ubisemiquinone to ubiquinol. The polypeptide is Na(+)-translocating NADH-quinone reductase subunit A (Neisseria meningitidis serogroup C / serotype 2a (strain ATCC 700532 / DSM 15464 / FAM18)).